Here is a 374-residue protein sequence, read N- to C-terminus: GDSL esterase/lipase 1 (374 aa).

The first 25 residues, 1–25 (MENSQLVSITFLAYTIIISIGSINC), serve as a signal peptide directing secretion. The N-linked (GlcNAc...) asparagine glycan is linked to N34. S44 serves as the catalytic Nucleophile. 3 N-linked (GlcNAc...) asparagine glycosylation sites follow: N184, N203, and N330. Catalysis depends on charge relay system residues D338 and H341. N-linked (GlcNAc...) asparagine glycosylation occurs at N360.

Belongs to the 'GDSL' lipolytic enzyme family.

The protein localises to the secreted. In terms of biological role, confers resistance to the necrotrophic fungus Alternaria brassicicola. Possesses lipase and antimicrobial activities that directly disrupt fungal spore integrity. Triggers systemic resistance, mostly by the ethylene-dependent pathway. This Arabidopsis thaliana (Mouse-ear cress) protein is GDSL esterase/lipase 1.